Consider the following 164-residue polypeptide: UPF0114 protein YqhA (164 aa).

3 helical membrane-spanning segments follow: residues 10 to 32 (YASRWLLAPVYFGLSLALIALAL), 53 to 75 (LILVLLSLVDMTLVGGLLVMVMF), and 136 to 155 (LMWYVIIHLTFVLSAFVMGY).

This sequence belongs to the UPF0114 family.

It localises to the cell membrane. This chain is UPF0114 protein YqhA, found in Salmonella typhi.